A 429-amino-acid polypeptide reads, in one-letter code: Zinc finger protein 385C (429 aa).

The Matrin-type 1 zinc finger occupies 77–107 (ISCNICHLRFNSANQAEAHYKGHRHARKLKA). Disordered regions lie at residues 109-224 (EAAK…GRGE), 258-295 (GHQG…GPSP), and 311-340 (QLKQ…NKLQ). Over residues 125–146 (TVVSSASPPASGSPGTPQSKGP) the composition is skewed to low complexity. Residues 147–162 (ASPPLGPSLQLPPTPD) are compositionally biased toward pro residues. Positions 181-193 (CDAAASSSSSSCP) are enriched in low complexity. The Matrin-type 2 zinc-finger motif lies at 225–259 (KGRLYCPTCKVTVNSASQLQAHNTGAKHRWMVEGH). Residues 262-284 (APRRGRGRPVSRGGTGHKTKRVI) show a composition bias toward basic residues. The segment at 297–327 (FHCALCQLHVNSETQLKQHMSSRRHKDRLAG) adopts a Matrin-type 3 zinc-finger fold.

Its subcellular location is the nucleus. This Mus musculus (Mouse) protein is Zinc finger protein 385C.